Consider the following 842-residue polypeptide: Elongation factor 2 (842 aa).

The region spanning 17 to 253 (TNVRNMSVIA…LWGDSYFNPK (237 aa)) is the tr-type G domain. GTP-binding positions include 26-33 (AHVDHGKS), 158-161 (NKVD), and 213-215 (SGL). A Diphthamide modification is found at H699.

The protein belongs to the TRAFAC class translation factor GTPase superfamily. Classic translation factor GTPase family. EF-G/EF-2 subfamily.

The protein resides in the cytoplasm. It carries out the reaction GTP + H2O = GDP + phosphate + H(+). Catalyzes the GTP-dependent ribosomal translocation step during translation elongation. During this step, the ribosome changes from the pre-translocational (PRE) to the post-translocational (POST) state as the newly formed A-site-bound peptidyl-tRNA and P-site-bound deacylated tRNA move to the P and E sites, respectively. Catalyzes the coordinated movement of the two tRNA molecules, the mRNA and conformational changes in the ribosome. The sequence is that of Elongation factor 2 (EFT1) from Kluyveromyces lactis (strain ATCC 8585 / CBS 2359 / DSM 70799 / NBRC 1267 / NRRL Y-1140 / WM37) (Yeast).